A 259-amino-acid polypeptide reads, in one-letter code: Trans-aconitate 2-methyltransferase (259 aa).

The protein belongs to the methyltransferase superfamily. Tam family.

Its subcellular location is the cytoplasm. It catalyses the reaction trans-aconitate + S-adenosyl-L-methionine = (E)-3-(methoxycarbonyl)pent-2-enedioate + S-adenosyl-L-homocysteine. Functionally, catalyzes the S-adenosylmethionine monomethyl esterification of trans-aconitate. The chain is Trans-aconitate 2-methyltransferase from Variovorax paradoxus (strain S110).